Here is a 453-residue protein sequence, read N- to C-terminus: Ribosome biogenesis protein YTM1 (453 aa).

Positions 19-102 are ubiquitin-like (UBL) domain; sequence VKVRFFTNEE…ETVIDLQYTR (84 aa). The sufficient for interaction with ERB1 and association with 66S pre-ribosomes stretch occupies residues 112–453; that stretch reads SFTNEDWISS…KKIDIYREAN (342 aa). WD repeat units follow at residues 128-166, 168-206, 218-257, 292-332, 334-373, 380-420, and 422-453; these read GHGA…ESQY, GHSG…VEEG, GHKG…MSAV, GHGQ…CVDT, STGF…STEQ, GHTN…AMYT, and GKGG…REAN.

This sequence belongs to the WD repeat WDR12/YTM1 family. As to quaternary structure, component of the NOP7 complex, composed of ERB1, NOP7 and YTM1. The complex is held together by ERB1, which interacts with NOP7 via its N-terminal domain and with YTM1 via a high-affinity interaction between the seven-bladed beta-propeller domains of the 2 proteins. The NOP7 complex associates with the 66S pre-ribosome. Interacts (via UBL domain) with MDN1 (via VWFA/MIDAS domain).

It is found in the nucleus. The protein resides in the nucleolus. Its subcellular location is the nucleoplasm. Its function is as follows. Component of the NOP7 complex, which is required for maturation of the 25S and 5.8S ribosomal RNAs and formation of the 60S ribosome. The protein is Ribosome biogenesis protein YTM1 of Meyerozyma guilliermondii (strain ATCC 6260 / CBS 566 / DSM 6381 / JCM 1539 / NBRC 10279 / NRRL Y-324) (Yeast).